The following is a 108-amino-acid chain: MGLSLAAYAGAALAEIAGCFAVWAWWRLGASALWLVPGALSLGTFAWLLALTPVEAAGRSYAVYGGVYVAASLLWLWAVEGVRPDRWDMGGAALVLAGAAVILWAPRG.

The next 4 membrane-spanning stretches (helical) occupy residues 5 to 25, 32 to 52, 62 to 82, and 86 to 106; these read LAAY…VWAW, ALWL…LALT, AVYG…VEGV, and RWDM…LWAP.

Belongs to the UPF0060 family.

Its subcellular location is the cell inner membrane. In Cereibacter sphaeroides (strain ATCC 17023 / DSM 158 / JCM 6121 / CCUG 31486 / LMG 2827 / NBRC 12203 / NCIMB 8253 / ATH 2.4.1.) (Rhodobacter sphaeroides), this protein is UPF0060 membrane protein RHOS4_03690.